The sequence spans 348 residues: Dihydroorotase (348 aa).

H17 and H19 together coordinate Zn(2+). Substrate is bound by residues 19–21 (HLR) and N45. Zn(2+)-binding residues include K103, H140, and H178. Residue K103 is modified to N6-carboxylysine. H140 serves as a coordination point for substrate. L223 serves as a coordination point for substrate. A Zn(2+)-binding site is contributed by D251. D251 is an active-site residue. H255 and A267 together coordinate substrate.

This sequence belongs to the metallo-dependent hydrolases superfamily. DHOase family. Class II DHOase subfamily. As to quaternary structure, homodimer. Requires Zn(2+) as cofactor.

It carries out the reaction (S)-dihydroorotate + H2O = N-carbamoyl-L-aspartate + H(+). It participates in pyrimidine metabolism; UMP biosynthesis via de novo pathway; (S)-dihydroorotate from bicarbonate: step 3/3. Catalyzes the reversible cyclization of carbamoyl aspartate to dihydroorotate. The chain is Dihydroorotase from Serratia proteamaculans (strain 568).